Consider the following 75-residue polypeptide: UPF0352 protein YejL (75 aa).

Belongs to the UPF0352 family.

In Escherichia coli O127:H6 (strain E2348/69 / EPEC), this protein is UPF0352 protein YejL.